Consider the following 72-residue polypeptide: Toxin Acra II-1 (72 aa).

In terms of domain architecture, LCN-type CS-alpha/beta spans 3–67 (VPGNYPLNTY…VWNAAKNYCK (65 aa)). 3 disulfide bridges follow: C18/C41, C27/C46, and C31/C48.

It belongs to the long (3 C-C) scorpion toxin superfamily. Sodium channel inhibitor family. Beta subfamily. Expressed by the venom gland.

The protein localises to the secreted. Its function is as follows. Binds to sodium channels (Nav) and affects the channel activation process. In Androctonus crassicauda (Arabian fat-tailed scorpion), this protein is Toxin Acra II-1.